The following is a 365-amino-acid chain: MLIYLFNWLSHYYKGLEVFSSYVSVRIIMISITSLLITLFLGRPMIRWLQKMQIGQVVRDDGPQSHFSKRNTPTMGGVLILSSVIISALLWGSLSSIYLWILILVVIFFGAIGFFDDYLKLVLKHPKGLRAKHKFALQSIFSIILAIVLFYLLSKNGQMNLSIPFTKNLHIPMGIFLFVVLTFFIINGSSNAVNLTDGLDGLAIVPVVLVAAGLGIYAYIQTNSVLANYLLFPYINNQGLAEVAVFCAALCGSGLAFLWFNSHPAEVFMGDVGSLTLGAVLGVIAVMIRQELIFFIMGLLFVVEALSVMLQVGSYKLRNGKRIFKMAPIHHHFELMGWPETKVVIRFWIVSLILFLIGLVAIKVR.

The next 10 membrane-spanning stretches (helical) occupy residues 22–42, 74–94, 95–115, 134–154, 169–189, 201–221, 240–260, 268–288, 292–312, and 342–362; these read YVSVRIIMISITSLLITLFLG, TMGGVLILSSVIISALLWGSL, SSIYLWILILVVIFFGAIGFF, KFALQSIFSIILAIVLFYLLS, LHIPMGIFLFVVLTFFIINGS, GLAIVPVVLVAAGLGIYAYIQ, LAEVAVFCAALCGSGLAFLWF, FMGDVGSLTLGAVLGVIAVMI, LIFFIMGLLFVVEALSVMLQV, and KVVIRFWIVSLILFLIGLVAI.

The protein belongs to the glycosyltransferase 4 family. MraY subfamily. Mg(2+) serves as cofactor.

It localises to the cell inner membrane. The enzyme catalyses UDP-N-acetyl-alpha-D-muramoyl-L-alanyl-gamma-D-glutamyl-meso-2,6-diaminopimeloyl-D-alanyl-D-alanine + di-trans,octa-cis-undecaprenyl phosphate = di-trans,octa-cis-undecaprenyl diphospho-N-acetyl-alpha-D-muramoyl-L-alanyl-D-glutamyl-meso-2,6-diaminopimeloyl-D-alanyl-D-alanine + UMP. It participates in cell wall biogenesis; peptidoglycan biosynthesis. Functionally, catalyzes the initial step of the lipid cycle reactions in the biosynthesis of the cell wall peptidoglycan: transfers peptidoglycan precursor phospho-MurNAc-pentapeptide from UDP-MurNAc-pentapeptide onto the lipid carrier undecaprenyl phosphate, yielding undecaprenyl-pyrophosphoryl-MurNAc-pentapeptide, known as lipid I. This chain is Phospho-N-acetylmuramoyl-pentapeptide-transferase, found in Francisella philomiragia subsp. philomiragia (strain ATCC 25017 / CCUG 19701 / FSC 153 / O#319-036).